Reading from the N-terminus, the 701-residue chain is Polyribonucleotide nucleotidyltransferase (701 aa).

Mg(2+)-binding residues include D480 and D486. Residues 547-606 (PKIDTIKIDVDKIKVVIGKGGETIDKIIAETGVKIDIDDEGNVSIYSSDQAAINRTKEII) enclose the KH domain. One can recognise an S1 motif domain in the interval 616-684 (GEVYHAKVVR…EKGRVDASMK (69 aa)). Positions 682–701 (SMKALIPRPPKPEKKEEKHD) are disordered. The segment covering 691 to 701 (PKPEKKEEKHD) has biased composition (basic and acidic residues).

It belongs to the polyribonucleotide nucleotidyltransferase family. Mg(2+) serves as cofactor.

Its subcellular location is the cytoplasm. The enzyme catalyses RNA(n+1) + phosphate = RNA(n) + a ribonucleoside 5'-diphosphate. Involved in mRNA degradation. Catalyzes the phosphorolysis of single-stranded polyribonucleotides processively in the 3'- to 5'-direction. The protein is Polyribonucleotide nucleotidyltransferase of Streptococcus pyogenes serotype M12 (strain MGAS2096).